The sequence spans 273 residues: Putative phosphoenolpyruvate synthase regulatory protein (273 aa).

153–160 (AVSRAGKT) serves as a coordination point for ADP.

It belongs to the pyruvate, phosphate/water dikinase regulatory protein family. PSRP subfamily.

The enzyme catalyses [pyruvate, water dikinase] + ADP = [pyruvate, water dikinase]-phosphate + AMP + H(+). The catalysed reaction is [pyruvate, water dikinase]-phosphate + phosphate + H(+) = [pyruvate, water dikinase] + diphosphate. Functionally, bifunctional serine/threonine kinase and phosphorylase involved in the regulation of the phosphoenolpyruvate synthase (PEPS) by catalyzing its phosphorylation/dephosphorylation. This chain is Putative phosphoenolpyruvate synthase regulatory protein, found in Xanthomonas axonopodis pv. citri (strain 306).